The sequence spans 288 residues: Nucleotide-binding protein PM0169 (288 aa).

Position 8–15 (8–15 (GHSGAGKS)) interacts with ATP. 56 to 59 (DIRN) contributes to the GTP binding site.

The protein belongs to the RapZ-like family.

Functionally, displays ATPase and GTPase activities. The chain is Nucleotide-binding protein PM0169 from Pasteurella multocida (strain Pm70).